The following is a 344-amino-acid chain: Beta-1,4-galactosyltransferase 4 (344 aa).

At 1–12 (MGCNPPYLLSYR) the chain is on the cytoplasmic side. The chain crosses the membrane as a helical; Signal-anchor for type II membrane protein span at residues 13 to 38 (LRLLLLFTLCLTVLGWATSNYFVGAI). Residues 39-344 (QVIPRAKNFM…NITVDFWTAA (306 aa)) are Lumenal-facing. Cys77 and Cys118 are joined by a disulfide. UDP-alpha-D-galactose-binding positions include 129-133 (PHRNR), 168-170 (FNR), and 195-196 (VD). Cys189 and Cys208 are disulfide-bonded. Asp196 is a Mn(2+) binding site. Asn220 carries an N-linked (GlcNAc...) asparagine glycan. Residues Tyr224 and Trp256 each coordinate UDP-alpha-D-galactose. 258-261 (GEDD) serves as a coordination point for N-acetyl-D-glucosamine. His289 provides a ligand contact to Mn(2+). 289 to 291 (HTR) lines the UDP-alpha-D-galactose pocket. Arg301 serves as a coordination point for N-acetyl-D-glucosamine. A glycan (N-linked (GlcNAc...) asparagine) is linked at Asn335.

This sequence belongs to the glycosyltransferase 7 family. As to quaternary structure, interacts with SLC35A2/UGT1. The cofactor is Mn(2+).

The protein localises to the golgi apparatus membrane. The protein resides in the secreted. The catalysed reaction is N-acetyl-D-glucosamine + UDP-alpha-D-galactose = beta-D-galactosyl-(1-&gt;4)-N-acetyl-D-glucosamine + UDP + H(+). The enzyme catalyses a beta-D-GlcNAc-(1-&gt;3)-beta-D-Gal-(1-&gt;4)-beta-D-Glc-(1&lt;-&gt;1)-Cer(d18:1(4E)) + UDP-alpha-D-galactose = a neolactoside nLc4Cer(d18:1(4E)) + UDP + H(+). It carries out the reaction 3-O-{beta-D-galactosyl-(1-&gt;3)-[6-O-sulfo-N-acetyl-beta-D-glucosaminyl-(1-&gt;6)]-N-acetyl-alpha-D-galactosaminyl}-L-seryl-[protein] + UDP-alpha-D-galactose = 3-O-{beta-D-galactosyl-(1-&gt;3)-[beta-D-galactosyl-(1-&gt;4)-6-O-sulfo-N-acetyl-beta-D-glucosaminyl-(1-&gt;6)]-N-acetyl-alpha-D-galactosaminyl}-L-seryl-[protein] + UDP + H(+). It catalyses the reaction 3-O-{beta-D-galactosyl-(1-&gt;3)-[6-O-sulfo-N-acetyl-beta-D-glucosaminyl-(1-&gt;6)]-N-acetyl-alpha-D-galactosaminyl}-L-threonyl-[protein] + UDP-alpha-D-galactose = 3-O-{beta-D-galactosyl-(1-&gt;3)-[beta-D-galactosyl-(1-&gt;4)-6-O-sulfo-N-acetyl-beta-D-glucosaminyl-(1-&gt;6)]-N-acetyl-alpha-D-galactosaminyl}-L-threonyl-[protein] + UDP + H(+). It functions in the pathway protein modification; protein glycosylation. The protein operates within glycolipid biosynthesis. Galactose (Gal) transferase involved in the synthesis of terminal N-acetyllactosamine (LacNac) unit present on glycan chains of glycoproteins and glycosphingolipids. Catalyzes the transfer of Gal residue via a beta1-&gt;4 linkage from UDP-Gal to the non-reducing terminal N-acetyl glucosamine 6-O-sulfate (6-O-sulfoGlcNAc) in the linearly growing chain of both N- and O-linked keratan sulfate proteoglycans. Cooperates with B3GNT7 N-acetyl glucosamine transferase and CHST6 and CHST1 sulfotransferases to construct and elongate mono- and disulfated disaccharide units [-&gt;3Galbeta1-&gt;4(6-sulfoGlcNAcbeta)1-&gt;] and [-&gt;3(6-sulfoGalbeta)1-&gt;4(6-sulfoGlcNAcbeta)1-&gt;] within keratan sulfate polymer. Transfers Gal residue via a beta1-&gt;4 linkage to terminal 6-O-sulfoGlcNAc within the LacNac unit of core 2 O-glycans forming 6-sulfo-sialyl-Lewis X (sLex). May contribute to the generation of sLex epitope on mucin-type glycoproteins that serve as ligands for SELL/L-selectin, a major regulator of leukocyte migration. In the biosynthesis pathway of neolacto-series glycosphingolipids, transfers Gal residue via a beta1-&gt;4 linkage to terminal GlcNAc of a lactotriaosylceramide (Lc3Cer) acceptor to form a neolactotetraosylceramide. This Rattus norvegicus (Rat) protein is Beta-1,4-galactosyltransferase 4 (B4galt4).